The primary structure comprises 146 residues: Hemoglobin subunit beta (146 aa).

At Val-1 the chain carries N-acetylvaline. Residues 2 to 146 form the Globin domain; the sequence is HLTGEEKSAV…VANALAHKYH (145 aa). Thr-12 is modified (phosphothreonine). Ser-44 carries the post-translational modification Phosphoserine. Lys-59 carries the post-translational modification N6-acetyllysine. His-63 provides a ligand contact to heme b. The residue at position 82 (Lys-82) is an N6-acetyllysine. His-92 serves as a coordination point for heme b. Cys-93 bears the S-nitrosocysteine mark. Lys-144 is modified (N6-acetyllysine).

The protein belongs to the globin family. As to quaternary structure, heterotetramer of two alpha chains and two beta chains. As to expression, red blood cells.

Functionally, involved in oxygen transport from the lung to the various peripheral tissues. The polypeptide is Hemoglobin subunit beta (HBB) (Nycticebus coucang (Slow loris)).